We begin with the raw amino-acid sequence, 379 residues long: Queuine tRNA-ribosyltransferase (379 aa).

Residue D96 is the Proton acceptor of the active site. Substrate-binding positions include 96–100 (DSGGF), D150, Q196, and G223. Positions 254–260 (GIGTPDY) are RNA binding. The active-site Nucleophile is the D273. Residues C311, C313, C316, and H342 each coordinate Zn(2+).

The protein belongs to the queuine tRNA-ribosyltransferase family. Homodimer. Within each dimer, one monomer is responsible for RNA recognition and catalysis, while the other monomer binds to the replacement base PreQ1. Zn(2+) is required as a cofactor.

It catalyses the reaction 7-aminomethyl-7-carbaguanine + guanosine(34) in tRNA = 7-aminomethyl-7-carbaguanosine(34) in tRNA + guanine. The protein operates within tRNA modification; tRNA-queuosine biosynthesis. Functionally, catalyzes the base-exchange of a guanine (G) residue with the queuine precursor 7-aminomethyl-7-deazaguanine (PreQ1) at position 34 (anticodon wobble position) in tRNAs with GU(N) anticodons (tRNA-Asp, -Asn, -His and -Tyr). Catalysis occurs through a double-displacement mechanism. The nucleophile active site attacks the C1' of nucleotide 34 to detach the guanine base from the RNA, forming a covalent enzyme-RNA intermediate. The proton acceptor active site deprotonates the incoming PreQ1, allowing a nucleophilic attack on the C1' of the ribose to form the product. After dissociation, two additional enzymatic reactions on the tRNA convert PreQ1 to queuine (Q), resulting in the hypermodified nucleoside queuosine (7-(((4,5-cis-dihydroxy-2-cyclopenten-1-yl)amino)methyl)-7-deazaguanosine). The polypeptide is Queuine tRNA-ribosyltransferase (Treponema denticola (strain ATCC 35405 / DSM 14222 / CIP 103919 / JCM 8153 / KCTC 15104)).